Reading from the N-terminus, the 356-residue chain is UDP-N-acetylglucosamine--N-acetylmuramyl-(pentapeptide) pyrophosphoryl-undecaprenol N-acetylglucosamine transferase (356 aa).

UDP-N-acetyl-alpha-D-glucosamine contacts are provided by residues 12–14, asparagine 124, arginine 163, serine 188, isoleucine 242, 261–266, and glutamine 287; these read TGG and ALTVSE.

Belongs to the glycosyltransferase 28 family. MurG subfamily.

Its subcellular location is the cell inner membrane. The catalysed reaction is di-trans,octa-cis-undecaprenyl diphospho-N-acetyl-alpha-D-muramoyl-L-alanyl-D-glutamyl-meso-2,6-diaminopimeloyl-D-alanyl-D-alanine + UDP-N-acetyl-alpha-D-glucosamine = di-trans,octa-cis-undecaprenyl diphospho-[N-acetyl-alpha-D-glucosaminyl-(1-&gt;4)]-N-acetyl-alpha-D-muramoyl-L-alanyl-D-glutamyl-meso-2,6-diaminopimeloyl-D-alanyl-D-alanine + UDP + H(+). The protein operates within cell wall biogenesis; peptidoglycan biosynthesis. In terms of biological role, cell wall formation. Catalyzes the transfer of a GlcNAc subunit on undecaprenyl-pyrophosphoryl-MurNAc-pentapeptide (lipid intermediate I) to form undecaprenyl-pyrophosphoryl-MurNAc-(pentapeptide)GlcNAc (lipid intermediate II). The protein is UDP-N-acetylglucosamine--N-acetylmuramyl-(pentapeptide) pyrophosphoryl-undecaprenol N-acetylglucosamine transferase of Pseudomonas fluorescens (strain SBW25).